The primary structure comprises 297 residues: MSKKPTTKKEVQTTGHSWDGIEELNTPLPRWWLWTFYATIVWGVAYSIAMPAWPIFASGATPGILGSSTRADVEKDIAKFAEMNKAVEDKLVATDLTAIAADPELVTYTRNAGAAVFRTWCAQCHGAGAGGNTGFPSLLDGDWLHGGSIETIYTNIKHGIRDPLDPDTLPVANMPAHLTDELLEPAQIDDVVQYVLKISGQPADEARATAGQQVFADNCVSCHGEDAKGMVEMGAPNLTDGIWLYGGDANTITTTIQLGRGGVMPSWSWAADGAKPRLSEAQIRAVASYVHSLGGGQ.

Topologically, residues 1-35 (MSKKPTTKKEVQTTGHSWDGIEELNTPLPRWWLWT) are cytoplasmic. Residues 36–56 (FYATIVWGVAYSIAMPAWPIF) form a helical membrane-spanning segment. At 57 to 297 (ASGATPGILG…SYVHSLGGGQ (241 aa)) the chain is on the periplasmic side. 2 Cytochrome c domains span residues 108–199 (YTRN…LKIS) and 206–294 (ARAT…HSLG). Heme c is bound by residues cysteine 121, cysteine 124, histidine 125, methionine 174, cysteine 219, cysteine 222, histidine 223, and methionine 264.

Belongs to the CcoP / FixP family. In terms of assembly, component of the cbb3-type cytochrome c oxidase at least composed of CcoN, CcoO, CcoQ and CcoP. Interacts with CcoH (via transmembrane domain). Heme c serves as cofactor.

Its subcellular location is the cell inner membrane. It functions in the pathway energy metabolism; oxidative phosphorylation. Its function is as follows. C-type cytochrome. Part of the cbb3-type cytochrome c oxidase complex. CcoP subunit is required for transferring electrons from donor cytochrome c via its heme groups to CcoO subunit. From there, electrons are shuttled to the catalytic binuclear center of CcoN subunit where oxygen reduction takes place. The complex also functions as a proton pump. The polypeptide is Cbb3-type cytochrome c oxidase subunit CcoP (Rhodobacter capsulatus (strain ATCC BAA-309 / NBRC 16581 / SB1003)).